Reading from the N-terminus, the 158-residue chain is Transcription elongation factor GreA (158 aa).

This sequence belongs to the GreA/GreB family.

Necessary for efficient RNA polymerase transcription elongation past template-encoded arresting sites. The arresting sites in DNA have the property of trapping a certain fraction of elongating RNA polymerases that pass through, resulting in locked ternary complexes. Cleavage of the nascent transcript by cleavage factors such as GreA or GreB allows the resumption of elongation from the new 3'terminus. GreA releases sequences of 2 to 3 nucleotides. The polypeptide is Transcription elongation factor GreA (Psychrobacter cryohalolentis (strain ATCC BAA-1226 / DSM 17306 / VKM B-2378 / K5)).